The primary structure comprises 158 residues: SsrA-binding protein (158 aa).

Residues Lys133–Arg148 show a composition bias toward basic and acidic residues. The disordered stretch occupies residues Lys133 to Gly158. Residues Gln149–Gly158 are compositionally biased toward basic residues.

The protein belongs to the SmpB family.

It localises to the cytoplasm. Required for rescue of stalled ribosomes mediated by trans-translation. Binds to transfer-messenger RNA (tmRNA), required for stable association of tmRNA with ribosomes. tmRNA and SmpB together mimic tRNA shape, replacing the anticodon stem-loop with SmpB. tmRNA is encoded by the ssrA gene; the 2 termini fold to resemble tRNA(Ala) and it encodes a 'tag peptide', a short internal open reading frame. During trans-translation Ala-aminoacylated tmRNA acts like a tRNA, entering the A-site of stalled ribosomes, displacing the stalled mRNA. The ribosome then switches to translate the ORF on the tmRNA; the nascent peptide is terminated with the 'tag peptide' encoded by the tmRNA and targeted for degradation. The ribosome is freed to recommence translation, which seems to be the essential function of trans-translation. The sequence is that of SsrA-binding protein from Jannaschia sp. (strain CCS1).